Here is a 682-residue protein sequence, read N- to C-terminus: L-type lectin-domain containing receptor kinase VI.2 (682 aa).

The first 26 residues, 1–26, serve as a signal peptide directing secretion; that stretch reads MGTQRSMFIVSFLFKLFLFLSVHVRA. At 27–310 the chain is on the extracellular side; sequence QRTTTNFAFR…AKKEGLNSQV (284 aa). Residues 29 to 277 form a legume-lectin like region; the sequence is TTTNFAFRGF…AHYVMGWSFS (249 aa). The helical transmembrane segment at 311-331 threads the bilayer; it reads IVMIVALSAVMLVMLVLLFFF. Residues 332–682 are Cytoplasmic-facing; that stretch reads VMYKKRLGQE…RVSSTSRISQ (351 aa). One can recognise a Protein kinase domain in the interval 367–641; the sequence is FKKTGIIGTG…LRYLNGEENV (275 aa). ATP contacts are provided by residues 373–381 and K395; that span reads IGTGGFGTV. Catalysis depends on D494, which acts as the Proton acceptor.

In the C-terminal section; belongs to the protein kinase superfamily. Ser/Thr protein kinase family. It in the N-terminal section; belongs to the leguminous lectin family. As to expression, strongly expressed in the vascular system and trichomes of the leaves. Also expressed in guard cells, anthers, stigmas and germinating seeds, but not found in petals or roots. Increased susceptibility to the bacteria Pseudomonas syringae, characterized by stronger necrotic symptoms and higher bacterial proliferation.

The protein localises to the cell membrane. It catalyses the reaction L-seryl-[protein] + ATP = O-phospho-L-seryl-[protein] + ADP + H(+). The enzyme catalyses L-threonyl-[protein] + ATP = O-phospho-L-threonyl-[protein] + ADP + H(+). Functionally, involved in negative regulation of abscisic acid response in seed germination. Involved in resistance response to the pathogenic bacteria Pseudomonas syringae. The polypeptide is L-type lectin-domain containing receptor kinase VI.2 (Arabidopsis thaliana (Mouse-ear cress)).